The chain runs to 159 residues: MKITILAVGKLKEKYWKQAIAEYEKRLGPYTKIDIIEVPDEKAPENMSDKEIEQVKEKEGQRILAKIKPQSTVITLEIQGKMLSSEGLAQELNQRMTQGQSDFVFVIGGSNGLHKDVLQRSNYALSFSKMTFPHQMMRVVLIEQVYRAFKIMRGEAYHK.

Residues Leu-76, Gly-108, and 127 to 132 (FSKMTF) contribute to the S-adenosyl-L-methionine site.

It belongs to the RNA methyltransferase RlmH family. Homodimer.

Its subcellular location is the cytoplasm. It catalyses the reaction pseudouridine(1915) in 23S rRNA + S-adenosyl-L-methionine = N(3)-methylpseudouridine(1915) in 23S rRNA + S-adenosyl-L-homocysteine + H(+). Its function is as follows. Specifically methylates the pseudouridine at position 1915 (m3Psi1915) in 23S rRNA. In Staphylococcus aureus (strain Mu3 / ATCC 700698), this protein is Ribosomal RNA large subunit methyltransferase H.